Reading from the N-terminus, the 190-residue chain is Thioredoxin F-type, chloroplastic (190 aa).

A disordered region spans residues 1–31 (MALHLSLSHQSWTSPAHPITSSDPTRSSVPG). The transit peptide at 1-77 (MALHLSLSHQ…SMEQALGTQE (77 aa)) directs the protein to the chloroplast. A compositionally biased stretch (polar residues) spans 7–30 (LSHQSWTSPAHPITSSDPTRSSVP). In terms of domain architecture, Thioredoxin spans 78–189 (MEAIVGKVTE…LLEAIQAARS (112 aa)). Residues C114 and C117 each act as nucleophile in the active site. A disulfide bridge links C114 with C117.

This sequence belongs to the thioredoxin family. Plant F-type subfamily. In terms of assembly, forms a complex with heterodimeric ferredoxin-thioredoxin reductase (FTR) and ferredoxin.

It is found in the plastid. The protein resides in the chloroplast. Participates in various redox reactions through the reversible oxidation of the active center dithiol to a disulfide. The F form is known to activate a number of enzymes of the photosynthetic carbon cycle. In Spinacia oleracea (Spinach), this protein is Thioredoxin F-type, chloroplastic.